We begin with the raw amino-acid sequence, 510 residues long: NAD(P)H-quinone oxidoreductase subunit 2 A, chloroplastic (510 aa).

The next 14 helical transmembrane spans lie at 31–51 (FIFP…IDLT), 59–79 (WFYF…LFRW), 99–119 (IFQF…VEYI), 124–144 (MAIT…MFLC), 149–169 (LITI…LSGY), 184–204 (LLMG…LYGL), 229–249 (ISIA…LAPF), 261–281 (PTPV…ALAT), 295–315 (WHLL…LLAI), 323–343 (MLAY…IVGD), 354–374 (YMLF…LFGL), 395–415 (ALSL…AGFF), 418–438 (LYLF…IGLL), and 484–504 (MTVC…ILAI).

The protein belongs to the complex I subunit 2 family. As to quaternary structure, NDH is composed of at least 16 different subunits, 5 of which are encoded in the nucleus.

The protein localises to the plastid. It is found in the chloroplast thylakoid membrane. The catalysed reaction is a plastoquinone + NADH + (n+1) H(+)(in) = a plastoquinol + NAD(+) + n H(+)(out). The enzyme catalyses a plastoquinone + NADPH + (n+1) H(+)(in) = a plastoquinol + NADP(+) + n H(+)(out). In terms of biological role, NDH shuttles electrons from NAD(P)H:plastoquinone, via FMN and iron-sulfur (Fe-S) centers, to quinones in the photosynthetic chain and possibly in a chloroplast respiratory chain. The immediate electron acceptor for the enzyme in this species is believed to be plastoquinone. Couples the redox reaction to proton translocation, and thus conserves the redox energy in a proton gradient. The chain is NAD(P)H-quinone oxidoreductase subunit 2 A, chloroplastic from Oryza sativa subsp. japonica (Rice).